A 158-amino-acid polypeptide reads, in one-letter code: ATP synthase subunit b' (158 aa).

A helical membrane pass occupies residues 24-44 (ATLPLMAVQILVLVFLLNAVF).

Belongs to the ATPase B chain family. As to quaternary structure, F-type ATPases have 2 components, F(1) - the catalytic core - and F(0) - the membrane proton channel. F(1) has five subunits: alpha(3), beta(3), gamma(1), delta(1), epsilon(1). F(0) has four main subunits: a(1), b(1), b'(1) and c(10-14). The alpha and beta chains form an alternating ring which encloses part of the gamma chain. F(1) is attached to F(0) by a central stalk formed by the gamma and epsilon chains, while a peripheral stalk is formed by the delta, b and b' chains.

The protein localises to the cellular thylakoid membrane. Its function is as follows. F(1)F(0) ATP synthase produces ATP from ADP in the presence of a proton or sodium gradient. F-type ATPases consist of two structural domains, F(1) containing the extramembraneous catalytic core and F(0) containing the membrane proton channel, linked together by a central stalk and a peripheral stalk. During catalysis, ATP synthesis in the catalytic domain of F(1) is coupled via a rotary mechanism of the central stalk subunits to proton translocation. In terms of biological role, component of the F(0) channel, it forms part of the peripheral stalk, linking F(1) to F(0). The b'-subunit is a diverged and duplicated form of b found in plants and photosynthetic bacteria. The sequence is that of ATP synthase subunit b' from Synechococcus elongatus (strain ATCC 33912 / PCC 7942 / FACHB-805) (Anacystis nidulans R2).